An 87-amino-acid chain; its full sequence is U3-theraphotoxin-Hhn1c (87 aa).

The N-terminal stretch at Met-1–Ala-24 is a signal peptide. Residues Ser-25 to Arg-52 constitute a propeptide that is removed on maturation. Cystine bridges form between Cys-54/Cys-67, Cys-61/Cys-72, and Cys-66/Cys-79.

The protein belongs to the neurotoxin 10 (Hwtx-1) family. 51 (Hntx-8) subfamily. Hntx-8 sub-subfamily. As to expression, expressed by the venom gland.

Its subcellular location is the secreted. Its function is as follows. Ion channel inhibitor. This is U3-theraphotoxin-Hhn1c from Cyriopagopus hainanus (Chinese bird spider).